The following is a 441-amino-acid chain: BTB/POZ domain-containing protein At4g30940 (441 aa).

The 69-residue stretch at 6–74 (DRIKFNVGGR…LRTGDLNIPP (69 aa)) folds into the BTB domain.

It participates in protein modification; protein ubiquitination. Its function is as follows. May act as a substrate-specific adapter of an E3 ubiquitin-protein ligase complex (CUL3-RBX1-BTB) which mediates the ubiquitination and subsequent proteasomal degradation of target proteins. The protein is BTB/POZ domain-containing protein At4g30940 of Arabidopsis thaliana (Mouse-ear cress).